The chain runs to 175 residues: Sec-independent protein translocase protein TatB (175 aa).

Residues 1–21 (MLDLGLSKMALIGVVALVVLG) traverse the membrane as a helical segment. Positions 99 to 115 (GDPAAADASGGLGATSD) are enriched in low complexity. Positions 99–118 (GDPAAADASGGLGATSDEPS) are disordered.

The protein belongs to the TatB family. As to quaternary structure, the Tat system comprises two distinct complexes: a TatABC complex, containing multiple copies of TatA, TatB and TatC subunits, and a separate TatA complex, containing only TatA subunits. Substrates initially bind to the TatABC complex, which probably triggers association of the separate TatA complex to form the active translocon.

The protein resides in the cell inner membrane. In terms of biological role, part of the twin-arginine translocation (Tat) system that transports large folded proteins containing a characteristic twin-arginine motif in their signal peptide across membranes. Together with TatC, TatB is part of a receptor directly interacting with Tat signal peptides. TatB may form an oligomeric binding site that transiently accommodates folded Tat precursor proteins before their translocation. The chain is Sec-independent protein translocase protein TatB from Burkholderia thailandensis (strain ATCC 700388 / DSM 13276 / CCUG 48851 / CIP 106301 / E264).